The primary structure comprises 643 residues: MMLGGKSSAGGRTSLRVAVAGDKGTGKSSLISAVASETFPDNVPRVLPPITLPADAFPDYIPITIVDTPSSIDNRIKLIEEFRKADVVLLTYACDQPSTLDRLSSYWLPELRRLEIKAPVIVVGCKLDLRDERSPARLEDIMSPIMKEYREIETCIECSALTLIQVPDVFYFASKAVLHPTFPLFDQEKQCLKPRLRRAVQRIFNLCDHDLDGALNDAELNDFQVNCFGAPLDPVELMGVKKVVQERQPDGVTDLGLTLPGFLFLFSLFIERGRPETAWAILRKCGYNDSLELHAELLPVPAKQSPDQSIELTNEAMDFLSGIFQLYDLDNDGALQPAELDDLFQTAPDSPWLEDPYKEAAEKTPGGSLTINGFLSEWALMTLLDPRKSLANLTYIGYGHDPASTFSVTRKRSVDRKKQRTERNVFQCFVFGPKKSGKSALLDSFLGRKFSNSYKATMGERYAANVIDQPGGSKKTLILREIPEDRVKKFLTNKESLAACDVAVVVYDSSDVYSWRKAREILMEVARRGEERGYGTPCLLVAAKDDLDPYPMSVQESDRVCMELGIDIPVSLSMKLGEPNSLFSRIVSTAENPHMSIPETESGRRSRNIRQLVNSSLLFVSVGTAVGFAGLAAYRAYSARKNA.

Topologically, residues 1–611 (MMLGGKSSAG…SGRRSRNIRQ (611 aa)) are cytoplasmic. The 168-residue stretch at 12–179 (RTSLRVAVAG…FYFASKAVLH (168 aa)) folds into the Miro 1 domain. 2 EF-hand domains span residues 195-230 (RLRR…CFGA) and 315-350 (EAMD…APDS). The Ca(2+) site is built by Asp-208, Asp-210, Asp-212, Glu-219, Asp-328, Asp-330, Asp-332, and Glu-339. One can recognise a Miro 2 domain in the interval 423–592 (RNVFQCFVFG…FSRIVSTAEN (170 aa)). A helical membrane pass occupies residues 612–632 (LVNSSLLFVSVGTAVGFAGLA). Residues 633–643 (AYRAYSARKNA) are Mitochondrial intermembrane-facing.

It belongs to the mitochondrial Rho GTPase family. Expressed roots, rosette and cauline leaves, stems, flowers and siliques.

Its subcellular location is the mitochondrion outer membrane. With respect to regulation, activated by calcium. In terms of biological role, calcium-binding mitochondrial GTPase involved in calcium signaling during salt stress response. May play a role in the progression of embryonic cell division, development of haploid male and female gametes, and pollen tube growth. In Arabidopsis thaliana (Mouse-ear cress), this protein is Mitochondrial Rho GTPase 2.